Consider the following 402-residue polypeptide: Coiled-coil domain-containing protein 188 (402 aa).

Disordered regions lie at residues 1 to 30, 50 to 74, and 108 to 131; these read MEGL…GGGL, HSVQ…EGEA, and HPGS…PCPC. Residues 154–189 adopt a coiled-coil conformation; that stretch reads GLLGSAEQSFLQLEQENHSLKRQNQELREQLGALLG. Residues 347-363 form a helical membrane-spanning segment; that stretch reads LLLGALLVWTAAYVYVV.

The protein resides in the membrane. This chain is Coiled-coil domain-containing protein 188, found in Homo sapiens (Human).